A 505-amino-acid polypeptide reads, in one-letter code: MGETLGDSPIDPESDSFTDTLSANISQEITMVDTEMPFWPTNFGISSVDLSVMDDHSHSFDIKPFTTVDFSSISAPHYEDIPFTRTDPMVADYKYDLKLQEYQSAIKVEPASPPYYSEKTQLYNKPHEEPSNSLMAIECRVCGDKASGFHYGVHACEGCKGFFRRTIRLKLIYDRCDLNCRIHKKSRNKCQYCRFQKCLAVGMSHNAIRFGRMPQAEKEKLLAEISSDIDQLNPESADLRALAKHLYDSYIKSFPLTKAKARAILTGKTTDKSPFVIYDMNSLMMGEDKIKFKHITPLQEQSKEVAIRIFQGCQFRSVEAVQEITEYAKSIPGFVNLDLNDQVTLLKYGVHEIIYTMLASLMNKDGVLISEGQGFMTREFLKSLRKPFGDFMEPKFEFAVKFNALELDDSDLAIFIAVIILSGDRPGLLNVKPIEDIQDNLLQALELQLKLNHPESSQLFAKLLQKMTDLRQIVTEHVQLLQVIKKTETDMSLHPLLQEIYKDLY.

O-linked (GlcNAc) threonine glycosylation is present at Thr-84. The residue at position 112 (Ser-112) is a Phosphoserine; by MAPK. The segment at residues 136-210 is a DNA-binding region (nuclear receptor); it reads AIECRVCGDK…VGMSHNAIRF (75 aa). 2 NR C4-type zinc fingers span residues 139–159 and 176–198; these read CRVCGDKASGFHYGVHACEGC and CDLNCRIHKKSRNKCQYCRFQKC. The interval 205-280 is interaction with FAM120B; that stretch reads HNAIRFGRMP…DKSPFVIYDM (76 aa). One can recognise an NR LBD domain in the interval 238 to 503; that stretch reads DLRALAKHLY…HPLLQEIYKD (266 aa). Residue Lys-252 forms a Glycyl lysine isopeptide (Lys-Gly) (interchain with G-Cter in ubiquitin) linkage. The 9aaTAD motif lies at 495–503; it reads PLLQEIYKD.

Belongs to the nuclear hormone receptor family. NR1 subfamily. As to quaternary structure, interacts with FOXO1 (acetylated form). Heterodimer with other nuclear receptors, such as RXRA. The heterodimer with the retinoic acid receptor RXRA is called adipocyte-specific transcription factor ARF6. Interacts with NCOA6 coactivator, leading to a strong increase in transcription of target genes. Interacts with coactivator PPARBP, leading to a mild increase in transcription of target genes. Interacts with NOCA7 in a ligand-inducible manner. Interacts with NCOA1 and NCOA2 LXXLL motifs. Interacts with ASXL1, ASXL2, DNTTIP2, FAM120B, MAP2K1/MEK1, NR0B2, PDPK1, PRDM16, PRMT2 and TGFB1I1. Interacts (when activated by agonist) with PPP5C. Interacts with HELZ2 and THRAP3; the interaction stimulates the transcriptional activity of PPARG. Interacts with PER2, the interaction is ligand dependent and blocks PPARG recruitment to target promoters. Interacts with NOCT. Interacts with ACTN4. Interacts (when in the liganded conformation) with GPS2. Interacts with CRY1 and CRY2 in a ligand-dependent manner. In the absence of hormonal ligand, interacts with TACC1. In macrophages, interacts with PAQR3 and STUB1; the interactions promote PPARG poylubiquitination and STUB1-mediated degradation. Post-translationally, O-GlcNAcylation at Thr-84 reduces transcriptional activity in adipocytes. In terms of processing, phosphorylated at basal conditions and dephosphorylated when treated with the ligand. May be dephosphorylated by PPP5C. The phosphorylated form may be inactive and dephosphorylation induces adipogenic activity. Ubiquitinated by E3 ubiquitin-protein ligase complex containing FBXO9; leading to proteasomal degradation. Ubiquitinated at Lys-252 by TRIM55 leading to proteasomal degradation. Ubiquitinated by E3 ubiquitin-protein ligase STUB1/CHIP; leading to proteasomal degradation. Highest expression in adipose tissue. Lower in liver, heart, kidney, stomach, duodenum and colon.

It localises to the nucleus. The protein resides in the cytoplasm. PDPK1 activates its transcriptional activity independently of its kinase activity. Nuclear receptor that binds peroxisome proliferators such as hypolipidemic drugs and fatty acids. Once activated by a ligand, the nuclear receptor binds to DNA specific PPAR response elements (PPRE) and modulates the transcription of its target genes, such as acyl-CoA oxidase. It therefore controls the peroxisomal beta-oxidation pathway of fatty acids. Key regulator of adipocyte differentiation and glucose homeostasis. ARF6 acts as a key regulator of the tissue-specific adipocyte P2 (aP2) enhancer. Acts as a critical regulator of gut homeostasis by suppressing NF-kappa-B-mediated pro-inflammatory responses. Plays a role in the regulation of cardiovascular circadian rhythms by regulating the transcription of BMAL1 in the blood vessels. This chain is Peroxisome proliferator-activated receptor gamma (PPARG), found in Macaca mulatta (Rhesus macaque).